The chain runs to 64 residues: Large ribosomal subunit protein eL37 (64 aa).

Zn(2+)-binding residues include C20, C23, C35, and C38. Residues 20–38 form a C4-type zinc finger; it reads CRRCGRRAFHVRKKVCAAC.

This sequence belongs to the eukaryotic ribosomal protein eL37 family. Requires Zn(2+) as cofactor.

Binds to the 23S rRNA. In Methanococcus maripaludis (strain DSM 14266 / JCM 13030 / NBRC 101832 / S2 / LL), this protein is Large ribosomal subunit protein eL37.